Here is a 156-residue protein sequence, read N- to C-terminus: Small ribosomal subunit protein uS7 (156 aa).

It belongs to the universal ribosomal protein uS7 family. In terms of assembly, part of the 30S ribosomal subunit. Contacts proteins S9 and S11.

One of the primary rRNA binding proteins, it binds directly to 16S rRNA where it nucleates assembly of the head domain of the 30S subunit. Is located at the subunit interface close to the decoding center, probably blocks exit of the E-site tRNA. This Mycoplasma mobile (strain ATCC 43663 / 163K / NCTC 11711) (Mesomycoplasma mobile) protein is Small ribosomal subunit protein uS7.